A 348-amino-acid polypeptide reads, in one-letter code: Small ribosomal subunit biogenesis GTPase RsgA (348 aa).

A compositionally biased stretch (basic residues) spans 1 to 14 (MAKRKLSKQQKWRI). Positions 1–39 (MAKRKLSKQQKWRIQKIQDERTKRATRKETQLESQLSGG) are disordered. A compositionally biased stretch (basic and acidic residues) spans 16 to 31 (KIQDERTKRATRKETQ). The CP-type G domain maps to 116–275 (FGQLKPIAAN…LIDSPGIREF (160 aa)). GTP contacts are provided by residues 163–166 (NKQD) and 217–225 (GQSGVGKSS). Zn(2+) is bound by residues Cys299, Cys304, His306, and Cys312.

This sequence belongs to the TRAFAC class YlqF/YawG GTPase family. RsgA subfamily. Monomer. Associates with 30S ribosomal subunit, binds 16S rRNA. Zn(2+) is required as a cofactor.

It is found in the cytoplasm. In terms of biological role, one of several proteins that assist in the late maturation steps of the functional core of the 30S ribosomal subunit. Helps release RbfA from mature subunits. May play a role in the assembly of ribosomal proteins into the subunit. Circularly permuted GTPase that catalyzes slow GTP hydrolysis, GTPase activity is stimulated by the 30S ribosomal subunit. This Hahella chejuensis (strain KCTC 2396) protein is Small ribosomal subunit biogenesis GTPase RsgA.